Consider the following 265-residue polypeptide: Cell adhesion molecule CEACAM10 (265 aa).

The first 33 residues, 1-33 (MELASAHLHKGQVPWVGLLLTASLLTYWSPATT), serve as a signal peptide directing secretion. Ig-like V-type domains are found at residues 35–142 (QVTV…HVHP) and 155–262 (QVTV…NVHA). Asparagine 44, asparagine 87, and asparagine 224 each carry an N-linked (GlcNAc...) asparagine glycan.

Belongs to the immunoglobulin superfamily. CEA family. In terms of tissue distribution, abundant in seminal vesicle and traces in epididymis and prostate (at protein level). Highly expressed in seminal vesicle, minor in colon and placenta and, to a lesser extent, in small intestine, caecum, stomach, salivary gland and bone marrow.

Its subcellular location is the secreted. It is found in the extracellular space. Functionally, may interact with other CEACAM proteins on the sperm surface. The chain is Cell adhesion molecule CEACAM10 from Mus musculus (Mouse).